The primary structure comprises 292 residues: ATP synthase gamma chain (292 aa).

This sequence belongs to the ATPase gamma chain family. As to quaternary structure, F-type ATPases have 2 components, CF(1) - the catalytic core - and CF(0) - the membrane proton channel. CF(1) has five subunits: alpha(3), beta(3), gamma(1), delta(1), epsilon(1). CF(0) has three main subunits: a, b and c.

It is found in the cell inner membrane. Produces ATP from ADP in the presence of a proton gradient across the membrane. The gamma chain is believed to be important in regulating ATPase activity and the flow of protons through the CF(0) complex. This chain is ATP synthase gamma chain, found in Brucella abortus (strain S19).